The chain runs to 131 residues: NADPH-dependent 7-cyano-7-deazaguanine reductase (131 aa).

Catalysis depends on cysteine 41, which acts as the Thioimide intermediate. Aspartate 48 functions as the Proton donor in the catalytic mechanism. Substrate-binding positions include 63-65 (VEL) and 82-83 (HE).

This sequence belongs to the GTP cyclohydrolase I family. QueF type 1 subfamily.

It is found in the cytoplasm. The enzyme catalyses 7-aminomethyl-7-carbaguanine + 2 NADP(+) = 7-cyano-7-deazaguanine + 2 NADPH + 3 H(+). It participates in tRNA modification; tRNA-queuosine biosynthesis. Functionally, catalyzes the NADPH-dependent reduction of 7-cyano-7-deazaguanine (preQ0) to 7-aminomethyl-7-deazaguanine (preQ1). This Nitratiruptor sp. (strain SB155-2) protein is NADPH-dependent 7-cyano-7-deazaguanine reductase.